Here is a 519-residue protein sequence, read N- to C-terminus: MFLLPLPAAGRVVVRRLAVRRFGSRSLSTADMTKGLVLGIYSKEKEDDVPQFTSAGENFDKLLAGKLRETLNISGPPLKAGKTRTFYGLHQDFPSVVLVGLGKKAAGIDEQENWHEGKENIRAAVAAGCRQIQDLELSSVEVDPCGDAQAAAEGAVLGLYEYDDLKQKKKMAVSAKLYGSGDQEAWQKGVLFASGQNLARQLMETPANEMTPTRFAEIIEKNLKSASSKTEVHIRPKSWIEEQAMGSFLSVAKGSDEPPVFLEIHYKGSPNANEPPLVFVGKGITFDSGGISIKASANMDLMRADMGGAATICSAIVSAAKLNLPINIIGLAPLCENMPSGKANKPGDVVRAKNGKTIQVDNTDAEGRLILADALCYAHTFNPKVILNAATLTGAMDVALGSGATGVFTNSSWLWNKLFEASIETGDRVWRMPLFEHYTRQVVDCQLADVNNIGKYRSAGACTAAAFLKEFVTHPKWAHLDIAGVMTNKDEVPYLRKGMTGRPTRTLIEFLLRFSQDNA.

Position 42 is a phosphoserine (S42). The residue at position 45 (K45) is an N6-succinyllysine. A Phosphoserine modification is found at S54. K61 and K103 each carry N6-succinyllysine. Residues S180 and S194 each carry the phosphoserine modification. 3 residues coordinate Zn(2+): L202, M203, and T205. K221 bears the N6-acetyllysine; alternate mark. K221 is modified (N6-succinyllysine; alternate). At S238 the chain carries Phosphoserine. K282 and D287 together coordinate Zn(2+). Substrate is bound by residues K282, D287, S292, and K294. D287 lines the Mg(2+) pocket. K294 is a catalytic residue. Residues R303, D305, D364, and E366 each contribute to the Zn(2+) site. 2 residues coordinate substrate: D305 and D364. Mg(2+) contacts are provided by D364 and E366. R368 is an active-site residue. An N6-acetyllysine; alternate modification is found at K455. An N6-succinyllysine; alternate modification is found at K455. K476 carries the post-translational modification N6-succinyllysine. K489 carries the post-translational modification N6-acetyllysine; alternate. K489 carries the post-translational modification N6-succinyllysine; alternate.

It belongs to the peptidase M17 family. As to quaternary structure, homohexamer. The cofactor is Zn(2+). Requires Mn(2+) as cofactor.

It is found in the cytoplasm. The catalysed reaction is Release of an N-terminal amino acid, Xaa-|-Yaa-, in which Xaa is preferably Leu, but may be other amino acids including Pro although not Arg or Lys, and Yaa may be Pro. Amino acid amides and methyl esters are also readily hydrolyzed, but rates on arylamides are exceedingly low.. The enzyme catalyses an S-substituted L-cysteinylglycine + H2O = an S-substituted L-cysteine + glycine. It catalyses the reaction L-cysteinylglycine + H2O = L-cysteine + glycine. It carries out the reaction S-benzyl-L-cysteinylglycine + H2O = S-benzyl-L-cysteine + glycine. The catalysed reaction is Release of N-terminal proline from a peptide.. Functionally, cytosolic metallopeptidase that catalyzes the removal of unsubstituted N-terminal hydrophobic amino acids from various peptides. The presence of Zn(2+) ions is essential for the peptidase activity, and the association with other cofactors can modulate the substrate spectificity of the enzyme. For instance, in the presence of Mn(2+), it displays a specific Cys-Gly hydrolyzing activity of Cys-Gly-S-conjugates. Involved in the metabolism of glutathione and in the degradation of glutathione S-conjugates, which may play a role in the control of the cell redox status. This is Cytosol aminopeptidase from Homo sapiens (Human).